Consider the following 431-residue polypeptide: Adenylosuccinate synthetase (431 aa).

GTP-binding positions include 13 to 19 and 41 to 43; these read GDEGKGK and GHT. Asp14 acts as the Proton acceptor in catalysis. Mg(2+) is bound by residues Asp14 and Gly41. Residues 14–17, 39–42, Thr130, Arg144, Gln225, Thr240, and Arg304 each bind IMP; these read DEGK and NAGH. Catalysis depends on His42, which acts as the Proton donor. 300–306 is a binding site for substrate; the sequence is ATTGRQR. GTP is bound by residues Arg306, 332–334, and 414–416; these read KLD and STG.

The protein belongs to the adenylosuccinate synthetase family. As to quaternary structure, homodimer. Mg(2+) serves as cofactor.

The protein resides in the cytoplasm. The enzyme catalyses IMP + L-aspartate + GTP = N(6)-(1,2-dicarboxyethyl)-AMP + GDP + phosphate + 2 H(+). It functions in the pathway purine metabolism; AMP biosynthesis via de novo pathway; AMP from IMP: step 1/2. Its function is as follows. Plays an important role in the de novo pathway of purine nucleotide biosynthesis. Catalyzes the first committed step in the biosynthesis of AMP from IMP. The sequence is that of Adenylosuccinate synthetase from Saccharophagus degradans (strain 2-40 / ATCC 43961 / DSM 17024).